We begin with the raw amino-acid sequence, 116 residues long: NADPH-dependent 7-cyano-7-deazaguanine reductase (116 aa).

Cys-31 (thioimide intermediate) is an active-site residue. Catalysis depends on Asp-38, which acts as the Proton donor. Substrate contacts are provided by residues 53–55 and 72–73; these read IEL and YE.

Belongs to the GTP cyclohydrolase I family. QueF type 1 subfamily.

Its subcellular location is the cytoplasm. The enzyme catalyses 7-aminomethyl-7-carbaguanine + 2 NADP(+) = 7-cyano-7-deazaguanine + 2 NADPH + 3 H(+). Its pathway is tRNA modification; tRNA-queuosine biosynthesis. Functionally, catalyzes the NADPH-dependent reduction of 7-cyano-7-deazaguanine (preQ0) to 7-aminomethyl-7-deazaguanine (preQ1). The polypeptide is NADPH-dependent 7-cyano-7-deazaguanine reductase (Chlorobium luteolum (strain DSM 273 / BCRC 81028 / 2530) (Pelodictyon luteolum)).